Here is a 543-residue protein sequence, read N- to C-terminus: CTP synthase (543 aa).

Residues M1 to L265 are amidoligase domain. S13 contributes to the CTP binding site. S13 contributes to the UTP binding site. Residues S14–I19 and D71 each bind ATP. Mg(2+) is bound by residues D71 and E139. CTP contacts are provided by residues D146–E148, K186–Q191, and K222. UTP contacts are provided by residues K186–Q191 and K222. The Glutamine amidotransferase type-1 domain occupies N290–K541. Residue G351 coordinates L-glutamine. The Nucleophile; for glutamine hydrolysis role is filled by C378. L-glutamine-binding positions include L379–Q382, E402, and R469. Catalysis depends on residues H514 and E516.

It belongs to the CTP synthase family. As to quaternary structure, homotetramer.

The catalysed reaction is UTP + L-glutamine + ATP + H2O = CTP + L-glutamate + ADP + phosphate + 2 H(+). The enzyme catalyses L-glutamine + H2O = L-glutamate + NH4(+). It carries out the reaction UTP + NH4(+) + ATP = CTP + ADP + phosphate + 2 H(+). Its pathway is pyrimidine metabolism; CTP biosynthesis via de novo pathway; CTP from UDP: step 2/2. With respect to regulation, allosterically activated by GTP, when glutamine is the substrate; GTP has no effect on the reaction when ammonia is the substrate. The allosteric effector GTP functions by stabilizing the protein conformation that binds the tetrahedral intermediate(s) formed during glutamine hydrolysis. Inhibited by the product CTP, via allosteric rather than competitive inhibition. In terms of biological role, catalyzes the ATP-dependent amination of UTP to CTP with either L-glutamine or ammonia as the source of nitrogen. Regulates intracellular CTP levels through interactions with the four ribonucleotide triphosphates. The chain is CTP synthase from Stutzerimonas stutzeri (strain A1501) (Pseudomonas stutzeri).